A 145-amino-acid polypeptide reads, in one-letter code: Putative pre-16S rRNA nuclease (145 aa).

It belongs to the YqgF nuclease family.

Its subcellular location is the cytoplasm. Could be a nuclease involved in processing of the 5'-end of pre-16S rRNA. The sequence is that of Putative pre-16S rRNA nuclease from Opitutus terrae (strain DSM 11246 / JCM 15787 / PB90-1).